The chain runs to 143 residues: Large ribosomal subunit protein uL11 (143 aa).

Belongs to the universal ribosomal protein uL11 family. As to quaternary structure, part of the ribosomal stalk of the 50S ribosomal subunit. Interacts with L10 and the large rRNA to form the base of the stalk. L10 forms an elongated spine to which L12 dimers bind in a sequential fashion forming a multimeric L10(L12)X complex. Post-translationally, one or more lysine residues are methylated.

Functionally, forms part of the ribosomal stalk which helps the ribosome interact with GTP-bound translation factors. The chain is Large ribosomal subunit protein uL11 from Paracidovorax citrulli (strain AAC00-1) (Acidovorax citrulli).